A 69-amino-acid polypeptide reads, in one-letter code: Conotoxin Lt5.7 (69 aa).

An N-terminal signal peptide occupies residues 1–19 (MLCLPVFIILLLLASPAAP). The propeptide occupies 20-54 (KSLETRIQNDLIRAGLTDADLKTEKGFLSGLLNVA).

This sequence belongs to the conotoxin T superfamily. Contains 2 disulfide bonds that can be either 'C1-C3, C2-C4' or 'C1-C4, C2-C3', since these disulfide connectivities have been observed for conotoxins with cysteine framework V (for examples, see AC P0DQQ7 and AC P81755). Expressed by the venom duct.

Its subcellular location is the secreted. This chain is Conotoxin Lt5.7, found in Conus litteratus (Lettered cone).